The sequence spans 187 residues: ATP synthase subunit b 2 (187 aa).

A helical transmembrane segment spans residues 32 to 52 (TTFAAQILWLAIAFGLLYYLM).

The protein belongs to the ATPase B chain family. F-type ATPases have 2 components, F(1) - the catalytic core - and F(0) - the membrane proton channel. F(1) has five subunits: alpha(3), beta(3), gamma(1), delta(1), epsilon(1). F(0) has three main subunits: a(1), b(2) and c(10-14). The alpha and beta chains form an alternating ring which encloses part of the gamma chain. F(1) is attached to F(0) by a central stalk formed by the gamma and epsilon chains, while a peripheral stalk is formed by the delta and b chains.

Its subcellular location is the cell inner membrane. In terms of biological role, f(1)F(0) ATP synthase produces ATP from ADP in the presence of a proton or sodium gradient. F-type ATPases consist of two structural domains, F(1) containing the extramembraneous catalytic core and F(0) containing the membrane proton channel, linked together by a central stalk and a peripheral stalk. During catalysis, ATP synthesis in the catalytic domain of F(1) is coupled via a rotary mechanism of the central stalk subunits to proton translocation. Its function is as follows. Component of the F(0) channel, it forms part of the peripheral stalk, linking F(1) to F(0). The b'-subunit is a diverged and duplicated form of b found in plants and photosynthetic bacteria. This is ATP synthase subunit b 2 (atpF2) from Methylobacterium sp. (strain 4-46).